The following is a 296-amino-acid chain: UDP-N-acetylglucosamine transporter TMEM241 (296 aa).

10 helical membrane-spanning segments follow: residues 7-29, 32-52, 67-87, 93-113, 121-141, 146-166, 187-207, 211-231, 250-270, and 271-291; these read LVGL…VLSV, FTYP…LLHV, SHVL…YAGS, LAIP…CGYQ, TSPA…CLPF, FNPD…AYKI, IFSV…FSVL, FLYF…GFFL, WIFF…DAIL, and TSAT…LVFS.

It belongs to the nucleotide-sugar transporter family. SLC35A subfamily.

It localises to the golgi apparatus. The protein localises to the cis-Golgi network membrane. Golgi-localized UDP-N-acetylglucosamine (UDP-GlcNAc) transporter that transports UDP-N-acetylglucosamine into Golgi lumen. Contributes to lysosomal targeting of NPC2, a key protein required for lysosomal cholesterol exiting, and that utilizes the mannose-6-phosphate (M6P) modification pathway for its lysosomal targeting. In Homo sapiens (Human), this protein is UDP-N-acetylglucosamine transporter TMEM241.